The primary structure comprises 377 residues: Porphobilinogen deaminase (377 aa).

Cys269 carries the S-(dipyrrolylmethanemethyl)cysteine modification.

Belongs to the HMBS family. Monomer. It depends on dipyrromethane as a cofactor.

The catalysed reaction is 4 porphobilinogen + H2O = hydroxymethylbilane + 4 NH4(+). It participates in porphyrin-containing compound metabolism; protoporphyrin-IX biosynthesis; coproporphyrinogen-III from 5-aminolevulinate: step 2/4. Tetrapolymerization of the monopyrrole PBG into the hydroxymethylbilane pre-uroporphyrinogen in several discrete steps. The protein is Porphobilinogen deaminase of Micrococcus luteus (strain ATCC 4698 / DSM 20030 / JCM 1464 / CCM 169 / CCUG 5858 / IAM 1056 / NBRC 3333 / NCIMB 9278 / NCTC 2665 / VKM Ac-2230) (Micrococcus lysodeikticus).